Here is a 269-residue protein sequence, read N- to C-terminus: uncharacterized protein (269 aa).

The segment at 1-21 (MAYSSSNSDIEDDSSKSNSNL) is disordered.

This is an uncharacterized protein from Homo sapiens (Human).